We begin with the raw amino-acid sequence, 69 residues long: Large ribosomal subunit protein bL31 (69 aa).

Zn(2+) contacts are provided by Cys16, Cys18, Cys37, and Cys40.

The protein belongs to the bacterial ribosomal protein bL31 family. Type A subfamily. Part of the 50S ribosomal subunit. Zn(2+) is required as a cofactor.

In terms of biological role, binds the 23S rRNA. The chain is Large ribosomal subunit protein bL31 from Buchnera aphidicola subsp. Baizongia pistaciae (strain Bp).